The chain runs to 176 residues: Large ribosomal subunit protein eL6A (176 aa).

Serine 2 carries the post-translational modification N-acetylserine. Serine 12 bears the Phosphoserine mark. Lysine 128 is covalently cross-linked (Glycyl lysine isopeptide (Lys-Gly) (interchain with G-Cter in ubiquitin)).

It belongs to the eukaryotic ribosomal protein eL6 family. As to quaternary structure, component of the large ribosomal subunit (LSU). Mature yeast ribosomes consist of a small (40S) and a large (60S) subunit. The 40S small subunit contains 1 molecule of ribosomal RNA (18S rRNA) and 33 different proteins (encoded by 57 genes). The large 60S subunit contains 3 rRNA molecules (25S, 5.8S and 5S rRNA) and 46 different proteins (encoded by 81 genes). N-terminally acetylated by acetyltransferase NatA.

It is found in the cytoplasm. Functionally, component of the ribosome, a large ribonucleoprotein complex responsible for the synthesis of proteins in the cell. The small ribosomal subunit (SSU) binds messenger RNAs (mRNAs) and translates the encoded message by selecting cognate aminoacyl-transfer RNA (tRNA) molecules. The large subunit (LSU) contains the ribosomal catalytic site termed the peptidyl transferase center (PTC), which catalyzes the formation of peptide bonds, thereby polymerizing the amino acids delivered by tRNAs into a polypeptide chain. The nascent polypeptides leave the ribosome through a tunnel in the LSU and interact with protein factors that function in enzymatic processing, targeting, and the membrane insertion of nascent chains at the exit of the ribosomal tunnel. The chain is Large ribosomal subunit protein eL6A from Saccharomyces cerevisiae (strain ATCC 204508 / S288c) (Baker's yeast).